The primary structure comprises 810 residues: Cell division control protein 48 homolog E (810 aa).

Ser2 carries the post-translational modification N-acetylserine. Ser41 carries the post-translational modification Phosphoserine. ATP contacts are provided by residues 248-255 (GPPGSGKT) and 521-528 (GPPGCGKT).

This sequence belongs to the AAA ATPase family.

Its subcellular location is the nucleus. The protein resides in the cytoplasm. It localises to the cytoskeleton. The protein localises to the phragmoplast. Its function is as follows. Probably functions in cell division and growth processes. Interacts with certain SNAREs as part of specialized membrane fusion events where vesicles from the same organelle fuse (homotypic fusion). The polypeptide is Cell division control protein 48 homolog E (CDC48E) (Arabidopsis thaliana (Mouse-ear cress)).